We begin with the raw amino-acid sequence, 94 residues long: DNA-binding protein HU (94 aa).

The protein belongs to the bacterial histone-like protein family. In terms of assembly, homodimer.

In terms of biological role, histone-like DNA-binding protein which is capable of wrapping DNA to stabilize it, and thus to prevent its denaturation under extreme environmental conditions. In Helicobacter pylori (strain J99 / ATCC 700824) (Campylobacter pylori J99), this protein is DNA-binding protein HU (hup).